Consider the following 312-residue polypeptide: Protein atonal (312 aa).

2 disordered regions span residues 136–174 (SNVGTCKTIPASAGPKPKRSYTKKNQPSTTATSTPTAAA) and 220–248 (NDGSFDLADGENQDAAAGGSGKKRRGKQI). Residues 162 to 174 (PSTTATSTPTAAA) show a composition bias toward low complexity. In terms of domain architecture, bHLH spans 255–307 (KRRLAANARERRRMQNLNQAFDRLRQYLPCLGNDRQLSKHETLQMAQTYISAL).

Efficient DNA binding requires dimerization with another bHLH protein. Forms a heterodimer with Daughterless. Proneural clusters and sense organ precursors of the chordotonal organs, optic furrow of the eye-antennal disk and developing brain lobe.

The protein localises to the nucleus. In terms of biological role, developmental protein involved in neurogenesis. Required for the formation of chordotonal organs and photoreceptors. Seems to bind to E boxes. Specifically required for the photoreceptor R8 selection. The protein is Protein atonal (ato) of Drosophila melanogaster (Fruit fly).